A 295-amino-acid polypeptide reads, in one-letter code: ATP synthase gamma chain (295 aa).

This sequence belongs to the ATPase gamma chain family. In terms of assembly, F-type ATPases have 2 components, CF(1) - the catalytic core - and CF(0) - the membrane proton channel. CF(1) has five subunits: alpha(3), beta(3), gamma(1), delta(1), epsilon(1). CF(0) has three main subunits: a, b and c.

Its subcellular location is the cell inner membrane. Produces ATP from ADP in the presence of a proton gradient across the membrane. The gamma chain is believed to be important in regulating ATPase activity and the flow of protons through the CF(0) complex. The chain is ATP synthase gamma chain from Sulfurimonas denitrificans (strain ATCC 33889 / DSM 1251) (Thiomicrospira denitrificans (strain ATCC 33889 / DSM 1251)).